The chain runs to 353 residues: Guanine nucleotide-binding protein subunit beta-5 (353 aa).

WD repeat units follow at residues 61–100 (GHGN…KEHA), 103–142 (MPCT…NENM), 151–192 (MHTN…QSFH), 194–236 (HGAD…QAFE), 237–276 (THES…EVAI), 278–320 (SKES…RVSI), and 323–352 (GHEN…LRVW).

It belongs to the WD repeat G protein beta family. In terms of assembly, component of a complex composed of RGS9 (isoform RGS9-1), GNB5 and RGS9BP; within this complex, the presence of GNB5 stabilizes both itself and RGS9 and increases RGS9 GTPase-activating protein (GAP) activity. Interacts with RGS7, forming the RGS7-GNB5 complex; within this complex, the presence of GNB5 increases RGS7 GTPase-activating protein (GAP) activity. Interacts with GPR158; promotes the GTPase activator activity of the RGS7-GNB5 complex in absence of glycine, in contrast GTPase activator activity of the RGS7-GNB5 complex is inhibited in presence of glycine. Interacts with RGS6. Detected in brain.

It is found in the membrane. Functionally, enhances GTPase-activating protein (GAP) activity of regulator of G protein signaling (RGS) proteins, such as RGS7 and RGS9, hence involved in the termination of the signaling initiated by the G protein coupled receptors (GPCRs) by accelerating the GTP hydrolysis on the G-alpha subunits, thereby promoting their inactivation. Increases RGS7 GTPase-activating protein (GAP) activity, thereby regulating mood and cognition. Increases RGS9 GTPase-activating protein (GAP) activity, hence contributes to the deactivation of G protein signaling initiated by D(2) dopamine receptors. May play an important role in neuronal signaling, including in the parasympathetic, but not sympathetic, control of heart rate. The polypeptide is Guanine nucleotide-binding protein subunit beta-5 (Gnb5) (Rattus norvegicus (Rat)).